Consider the following 231-residue polypeptide: NADH-ubiquinone oxidoreductase chain 4 (231 aa).

A run of 6 helical transmembrane segments spans residues 1 to 21 (PIAG…YGII), 34 to 54 (VFLP…LTCL), 61 to 80 (SLIA…AIMI), 84 to 106 (WGLS…LFCL), 118 to 138 (ILIL…WWLL), and 169 to 189 (TIIL…HMFL).

This sequence belongs to the complex I subunit 4 family.

It localises to the mitochondrion membrane. It carries out the reaction a ubiquinone + NADH + 5 H(+)(in) = a ubiquinol + NAD(+) + 4 H(+)(out). Its function is as follows. Core subunit of the mitochondrial membrane respiratory chain NADH dehydrogenase (Complex I) that is believed to belong to the minimal assembly required for catalysis. Complex I functions in the transfer of electrons from NADH to the respiratory chain. The immediate electron acceptor for the enzyme is believed to be ubiquinone. This Porthidium nasutum (Hognosed pitviper) protein is NADH-ubiquinone oxidoreductase chain 4 (MT-ND4).